A 372-amino-acid chain; its full sequence is tRNA-specific 2-thiouridylase MnmA (372 aa).

ATP is bound by residues 7 to 14 (GLSGGVDS) and Met-33. The tract at residues 104–106 (NPD) is interaction with target base in tRNA. Residue Cys-109 is the Nucleophile of the active site. Cys-109 and Cys-202 form a disulfide bridge. Residue Gly-134 participates in ATP binding. Residues 152–154 (KDQ) form an interaction with tRNA region. The active-site Cysteine persulfide intermediate is Cys-202. An interaction with tRNA region spans residues 310–311 (RY).

The protein belongs to the MnmA/TRMU family.

Its subcellular location is the cytoplasm. It carries out the reaction S-sulfanyl-L-cysteinyl-[protein] + uridine(34) in tRNA + AH2 + ATP = 2-thiouridine(34) in tRNA + L-cysteinyl-[protein] + A + AMP + diphosphate + H(+). Its function is as follows. Catalyzes the 2-thiolation of uridine at the wobble position (U34) of tRNA, leading to the formation of s(2)U34. The chain is tRNA-specific 2-thiouridylase MnmA from Mesomycoplasma hyopneumoniae (strain 7448) (Mycoplasma hyopneumoniae).